The chain runs to 64 residues: Crotamine CRO3 (64 aa).

An N-terminal signal peptide occupies residues 1-22 (MILYLLFAFLFLAFLSEPGNAY). 3 disulfides stabilise this stretch: Cys-25–Cys-57, Cys-32–Cys-51, and Cys-39–Cys-58.

Belongs to the crotamine-myotoxin family. As to quaternary structure, monomer. Expressed by the venom gland.

Its subcellular location is the secreted. Its function is as follows. Cationic peptide that possesses multiple functions. It acts as a cell-penetrating peptide (CPP), and as a potent voltage-gated potassium channel (Kv) inhibitor. It exhibits antimicrobial activities, hind limb paralysis, and severe muscle necrosis by a non-enzymatic mechanism. This Crotalus durissus terrificus (South American rattlesnake) protein is Crotamine CRO3 (CRO3).